Consider the following 313-residue polypeptide: LUC7-related splicing factor homolog (313 aa).

Residues 237 to 313 (RKEREEKLGS…RDRRDRDRRY (77 aa)) form a disordered region.

This sequence belongs to the Luc7 family.

This is LUC7-related splicing factor homolog from Caenorhabditis elegans.